The chain runs to 342 residues: tRNA N6-adenosine threonylcarbamoyltransferase (342 aa).

2 residues coordinate Fe cation: histidine 112 and histidine 116. Substrate-binding positions include 134–138 (LASGG), aspartate 167, glycine 180, and asparagine 280. Aspartate 308 is a binding site for Fe cation.

The protein belongs to the KAE1 / TsaD family. Fe(2+) serves as cofactor.

The protein resides in the cytoplasm. It carries out the reaction L-threonylcarbamoyladenylate + adenosine(37) in tRNA = N(6)-L-threonylcarbamoyladenosine(37) in tRNA + AMP + H(+). Functionally, required for the formation of a threonylcarbamoyl group on adenosine at position 37 (t(6)A37) in tRNAs that read codons beginning with adenine. Is involved in the transfer of the threonylcarbamoyl moiety of threonylcarbamoyl-AMP (TC-AMP) to the N6 group of A37, together with TsaE and TsaB. TsaD likely plays a direct catalytic role in this reaction. This is tRNA N6-adenosine threonylcarbamoyltransferase from Rickettsia canadensis (strain McKiel).